We begin with the raw amino-acid sequence, 225 residues long: Membrane-spanning 4-domains subfamily A member 4D (225 aa).

Residues 1–42 (MQGLAQTTMAVVPGGAPPSENSVIKSQMWNKNKEKFLKGEPK) lie on the Cytoplasmic side of the membrane. Residues 43–63 (VLGAIQVMIAFINFSLGIIII) form a helical membrane-spanning segment. Topologically, residues 64–73 (LNRVSERFMS) are extracellular. Residues 74–94 (VLLLAPFWGSIMFIFSGSLSI) form a helical membrane-spanning segment. At 95–113 (AAGVKPTKAMIISSLSVNT) the chain is on the cytoplasmic side. Residues 114–134 (ISSVLAVAASIIGVISVISGV) traverse the membrane as a helical segment. The Extracellular portion of the chain corresponds to 135-148 (FRQFRSQPAIASLD). A helical membrane pass occupies residues 149–169 (VLMTILNMLEFCIAVSVSAFG). Over 170-225 (CKASCCNSSEVLVVLPSNSAVTVTAPPMILQPLPPSECQGKNVPENLYRNQPGEIV) the chain is Cytoplasmic.

The protein belongs to the MS4A family. In terms of tissue distribution, expressed in thymus, spleen, peripheral lymph node, liver, kidney, heart, colon, lung, and testes.

It localises to the membrane. May be involved in signal transduction as a component of a multimeric receptor complex. The protein is Membrane-spanning 4-domains subfamily A member 4D (Ms4a4d) of Mus musculus (Mouse).